Reading from the N-terminus, the 251-residue chain is MTTRLPQLLLALLASAVSLAASADEVQVAVAANFTAPIQAIAKEFEKDTGHRLVAAYGATGQFYTQIKNGAPFQVFLSADDSTPAKLEQEGEVVPGSRFTYAIGTLALWSPKAGYVDAEGEVLKSGSFRHLSIANPKTAPYGLAATQAMDKLGLAATLGPKLVEGQNISQAYQFVSSGNAELGFVALSQIYKDGKVATGSAWIVPTELHDPIRQDAVILNKGKDNAAAKALVDYLKGAKAAALIKSYGYEL.

The signal sequence occupies residues 1-23 (MTTRLPQLLLALLASAVSLAASA). Residues Thr-60 and Ile-168 each coordinate molybdate.

It belongs to the bacterial solute-binding protein ModA family. As to quaternary structure, the complex is composed of two ATP-binding proteins (ModC), two transmembrane proteins (ModB) and a solute-binding protein (ModA).

It localises to the periplasm. Functionally, part of the ABC transporter complex ModABC involved in the transport of molybdenum into the cell. Binds tungstate and molybdate. Can also bind chromate, with lower affinity. Plays an essential role in recruitment of molybdate for nitrate reduction. This chain is Tungstate/molybdate/chromate-binding protein ModA, found in Pseudomonas aeruginosa (strain ATCC 15692 / DSM 22644 / CIP 104116 / JCM 14847 / LMG 12228 / 1C / PRS 101 / PAO1).